We begin with the raw amino-acid sequence, 432 residues long: Neuronal pentraxin-1 (432 aa).

Positions 1–22 (MPAGRAARTCALLALCLLGAGA) are cleaved as a signal peptide. The segment at 90-122 (ESQSTLDPGAGEARAGGGRKQPGSGKNTMGDLS) is disordered. Residues N154 and N193 are each glycosylated (N-linked (GlcNAc...) asparagine). Residues 226–428 (DKFQLTFPLR…GATKWTFEAC (203 aa)) form the Pentraxin (PTX) domain. C256 and C316 are oxidised to a cystine. Ca(2+) is bound by residues N280, E358, Q359, D360, and Q370.

Homooligomer or heterooligomer (probably pentamer) with neuronal pentraxin receptor (NPTXR). It depends on Ca(2+) as a cofactor.

Its subcellular location is the secreted. It is found in the cytoplasmic vesicle. The protein resides in the secretory vesicle. The protein localises to the endoplasmic reticulum. Its function is as follows. May be involved in mediating uptake of synaptic material during synapse remodeling or in mediating the synaptic clustering of AMPA glutamate receptors at a subset of excitatory synapses. In Homo sapiens (Human), this protein is Neuronal pentraxin-1 (NPTX1).